Here is a 261-residue protein sequence, read N- to C-terminus: Indole-3-glycerol phosphate synthase (261 aa).

Belongs to the TrpC family.

It catalyses the reaction 1-(2-carboxyphenylamino)-1-deoxy-D-ribulose 5-phosphate + H(+) = (1S,2R)-1-C-(indol-3-yl)glycerol 3-phosphate + CO2 + H2O. It functions in the pathway amino-acid biosynthesis; L-tryptophan biosynthesis; L-tryptophan from chorismate: step 4/5. This Paraburkholderia phymatum (strain DSM 17167 / CIP 108236 / LMG 21445 / STM815) (Burkholderia phymatum) protein is Indole-3-glycerol phosphate synthase.